A 211-amino-acid polypeptide reads, in one-letter code: Protein GrpE (211 aa).

Over residues 1-13 (MVDKDEEQIKQNV) the composition is skewed to basic and acidic residues. Positions 1 to 38 (MVDKDEEQIKQNVEEDLSSTVEQTGEENIEFPSAPNHP) are disordered.

The protein belongs to the GrpE family. As to quaternary structure, homodimer.

It is found in the cytoplasm. Functionally, participates actively in the response to hyperosmotic and heat shock by preventing the aggregation of stress-denatured proteins, in association with DnaK and GrpE. It is the nucleotide exchange factor for DnaK and may function as a thermosensor. Unfolded proteins bind initially to DnaJ; upon interaction with the DnaJ-bound protein, DnaK hydrolyzes its bound ATP, resulting in the formation of a stable complex. GrpE releases ADP from DnaK; ATP binding to DnaK triggers the release of the substrate protein, thus completing the reaction cycle. Several rounds of ATP-dependent interactions between DnaJ, DnaK and GrpE are required for fully efficient folding. The chain is Protein GrpE from Protochlamydia amoebophila (strain UWE25).